Reading from the N-terminus, the 956-residue chain is Translation initiation factor IF-2 (956 aa).

Residues 50 to 351 (FPADSGGAAN…APSIGGVQVP (302 aa)) are disordered. Residues 64-95 (APKPARAPKPAPKAAPAPPVEEAPAEPAPPAA) are compositionally biased toward pro residues. Composition is skewed to low complexity over residues 96–107 (PEVVAAPEAPVA) and 121–136 (PEAPAAERPAAQARPA). The span at 146-155 (AAEKPADTRT) shows a compositional bias: basic and acidic residues. 2 stretches are compositionally biased toward gly residues: residues 171–192 (RPGGQGGPRPGGPRPSGGGGPR) and 206–234 (RPGGSGAAGPRPGGTGAAGPRPGGSGQGG). Residues 235–254 (SRPSPGMMPGRSAVGRPGAP) are compositionally biased toward low complexity. The segment covering 255 to 320 (ARGGSGGPGG…GTQGAFGRAG (66 aa)) has biased composition (gly residues). The span at 324 to 333 (VRARKSRRAK) shows a compositional bias: basic residues. In terms of domain architecture, tr-type G spans 448 to 619 (ARPPVVTVMG…AVLLTADAAL (172 aa)). Residues 457–464 (GHVDHGKT) form a G1 region. 457 to 464 (GHVDHGKT) provides a ligand contact to GTP. The G2 stretch occupies residues 482-486 (GITQH). Residues 507 to 510 (DTPG) form a G3 region. GTP contacts are provided by residues 507 to 511 (DTPGH) and 561 to 564 (NKVD). The G4 stretch occupies residues 561–564 (NKVD). A G5 region spans residues 597–599 (SAK).

This sequence belongs to the TRAFAC class translation factor GTPase superfamily. Classic translation factor GTPase family. IF-2 subfamily.

The protein localises to the cytoplasm. Functionally, one of the essential components for the initiation of protein synthesis. Protects formylmethionyl-tRNA from spontaneous hydrolysis and promotes its binding to the 30S ribosomal subunits. Also involved in the hydrolysis of GTP during the formation of the 70S ribosomal complex. This is Translation initiation factor IF-2 from Beutenbergia cavernae (strain ATCC BAA-8 / DSM 12333 / CCUG 43141 / JCM 11478 / NBRC 16432 / NCIMB 13614 / HKI 0122).